A 456-amino-acid chain; its full sequence is Ribosome assembly protein METTL17, mitochondrial (456 aa).

Residues 1-19 constitute a mitochondrion transit peptide; that stretch reads MAAALKCLLTLGRWCPGLG. [4Fe-4S] cluster is bound by residues C333, C339, C347, and C404.

Belongs to the methyltransferase superfamily. Rsm22 family. In terms of assembly, associates with the mitochondrial ribosome (mitoribosome).

The protein localises to the mitochondrion matrix. Its function is as follows. Mitochondrial ribosome (mitoribosome) assembly factor. Binds at the interface of the head and body domains of the mitochondrial small ribosomal subunit (mt-SSU), occluding the mRNA channel and preventing compaction of the head domain towards the body. Probable inactive methyltransferase: retains the characteristic folding and ability to bind S-adenosyl-L-methionine, but it probably lost its methyltransferase activity. This Homo sapiens (Human) protein is Ribosome assembly protein METTL17, mitochondrial.